The following is a 47-amino-acid chain: Ribosome-inactivating protein luffin P1 (47 aa).

2 cysteine pairs are disulfide-bonded: Cys-12–Cys-33 and Cys-16–Cys-29.

As to quaternary structure, homotetramer.

The catalysed reaction is Endohydrolysis of the N-glycosidic bond at one specific adenosine on the 28S rRNA.. Functionally, inhibits protein synthesis in animal cells. This chain is Ribosome-inactivating protein luffin P1, found in Luffa aegyptiaca (Sponge gourd).